A 694-amino-acid polypeptide reads, in one-letter code: Elongation factor G (694 aa).

The region spanning 8-287 (EDYRNFGIMA…AVVEFLPAPT (280 aa)) is the tr-type G domain. Residues 17-24 (AHIDAGKT), 86-90 (DTPGH), and 140-143 (NKMD) contribute to the GTP site.

Belongs to the TRAFAC class translation factor GTPase superfamily. Classic translation factor GTPase family. EF-G/EF-2 subfamily.

The protein localises to the cytoplasm. Catalyzes the GTP-dependent ribosomal translocation step during translation elongation. During this step, the ribosome changes from the pre-translocational (PRE) to the post-translocational (POST) state as the newly formed A-site-bound peptidyl-tRNA and P-site-bound deacylated tRNA move to the P and E sites, respectively. Catalyzes the coordinated movement of the two tRNA molecules, the mRNA and conformational changes in the ribosome. The chain is Elongation factor G from Brucella suis (strain ATCC 23445 / NCTC 10510).